The primary structure comprises 463 residues: Glycine--tRNA ligase (463 aa).

R98 and E170 together coordinate substrate. ATP-binding positions include 202–204, 212–217, 287–288, and 331–334; these read RNE, FRTREF, EL, and GIER. A substrate-binding site is contributed by 217–221; it reads FEQFE. 327–331 is a binding site for substrate; the sequence is EPSLG.

The protein belongs to the class-II aminoacyl-tRNA synthetase family. Homodimer.

The protein resides in the cytoplasm. The enzyme catalyses tRNA(Gly) + glycine + ATP = glycyl-tRNA(Gly) + AMP + diphosphate. Catalyzes the attachment of glycine to tRNA(Gly). The chain is Glycine--tRNA ligase from Mycoplasmoides gallisepticum (strain R(low / passage 15 / clone 2)) (Mycoplasma gallisepticum).